Here is an 82-residue protein sequence, read N- to C-terminus: Penaeidin-3b (82 aa).

Residues 1–19 (MRLVVCLVFLASFALVCQG) form the signal peptide. Position 20 is a pyrrolidone carboxylic acid (Gln20). Disulfide bonds link Cys51-Cys66, Cys55-Cys73, and Cys67-Cys74. Ser81 carries the post-translational modification Serine amide.

The protein belongs to the penaeidin family. As to expression, higher expression in hemocytes and to a lesser extent in heart, testis, gills, intestine, lymphoid organ and hepatopancreas. Traces in eyes and subcuticular epithelium. Not present in the brain.

The protein resides in the cytoplasmic granule. Antibacterial activity against M.luteus and E.coli bacteria. Antifungal activity against N.crassa and F.oxysporum. Presents chitin-binding activity. In Penaeus vannamei (Whiteleg shrimp), this protein is Penaeidin-3b.